The following is a 772-amino-acid chain: Transcription factor sdnS (772 aa).

The zn(2)-C6 fungal-type DNA-binding region spans 23 to 53; it reads CWECRRRKIRCQFGAGNDTVCLPCQARGSTC. 2 disordered regions span residues 94–121 and 156–180; these read EAGG…SAQN and ASML…NSKT. The segment covering 100 to 121 has biased composition (polar residues); that stretch reads ANRSTTQSNRGSRSPSPDSAQN.

The protein resides in the nucleus. It participates in antibiotic biosynthesis. Transcription factor; part of the gene cluster that mediates the biosynthesis of sordarin and hypoxysordarin, glycoside antibiotics with a unique tetracyclic diterpene aglycone structure. First, the geranylgeranyl diphosphate synthase sdnC constructs GGDP from farnesyl diphosphate and isopentenyl diphosphate. The diterpene cyclase sdnA then catalyzes the cyclization of GGDP to afford cycloaraneosene. Cycloaraneosene is then hydroxylated four times by the putative cytochrome P450 monooxygenases sdnB, sdnE, sdnF and sdnH to give a hydroxylated cycloaraneosene derivative such as cycloaraneosene-8,9,13,19-tetraol. Although the order of the hydroxylations is unclear, at least C8, C9 and C13 of the cycloaraneosene skeleton are hydroxylated before the sordaricin formation. Dehydration of the 13-hydroxy group of the hydroxylated cycloaraneosene derivative might be catalyzed by an unassigned hypothetical protein such as sdnG and sdnP to construct the cyclopentadiene moiety. The FAD-dependent oxidoreductase sdnN is proposed to catalyze the oxidation at C9 of the hydroxylated cycloaraneosene derivative and also catalyze the Baeyer-Villiger oxidation to give the lactone intermediate. The presumed lactone intermediate would be hydrolyzed to give an acrolein moiety and a carboxylate moiety. Then, [4+2]cycloaddition would occur between the acrolein moiety and the cyclopentadiene moiety to give sordaricin. SdnN might also be involved in the [4+2]cycloaddition after the hypothesized oxidation to accommodate the oxidized product and prompt the [4+2]cycloaddition. GDP-6-deoxy-D-altrose may be biosynthesized from GDP-D-mannose by the putative GDP-mannose-4,6-dehydratase sdnI and the short-chain dehydrogenase sdnK. The glycosyltransferase sdnJ catalyzes the attachment of 6-deoxy-D-altrose onto the 19-hydroxy group of sordaricin to give 4'-O-demethylsordarin. The methyltransferase sdnD would complete the biosynthesis of sordarin. Sordarin can be further modified into hypoxysordarin. The unique acyl chain at the 3'-hydroxy group of hypoxysordarin would be constructed by an iterative type I PKS sdnO and the trans-acting polyketide methyltransferase sdnL. SdnL would be responsible for the introduction of an alpha-methyl group of the polyketide chain. Alternatively, the beta-lactamase-like protein sdnR might be responsible for the cleavage and transfer of the polyketide chain from the PKS sdnO to sordarin. Two putative cytochrome P450 monooxygenases, sdnQ and sdnT, might catalyze the epoxidations of the polyketide chain to complete the biosynthesis of hypoxysordarin. Transcriptional regulators sdnM and sdnS are presumably encoded for the transcriptional regulation of the expression of the sdn gene cluster. The polypeptide is Transcription factor sdnS (Sordaria araneosa (Pleurage araneosa)).